Consider the following 755-residue polypeptide: MSVTEIEEGIFESTATIDNGSFGTRTIRFETGRLALQAAGSVVAYLDDETMLLSTTAASKTPKDHFDFFPLTVDVEERMYAAGRIPGSFFRREGRPSTDAILTCRLIDRPLRPSFVSGLRNEIQVVVTVLSLNPADLYDVLAINAASASTQLAGLPFSGPVGGVRVALIEGQWVAFPTVEQLEKAVFDMVVAGRKVGTAGDSDVAIMMVEAEATDNVIALIDGGAGAPTETVVAEGLEAAKPFIAALCTAQEELAGSAAKPTGEFPLFPDYQDDVYAAVAAVATEPLSQALSIAGKAERDEKTDEIKVDVLGRLQEGFDGREKEIGAAFRSLTKKLVRQRILKDQFRIDGRGVTDIRALSAEVAVIPRAHGSALFERGETQIMGVTTLDMIKMAQQVDSLGPETTKRYMHHYNFPPFSTGETGRVGSPKRREIGHGALAERALIPVLPSIEEFPYAIRQVSEALGSNGSTSMGSVCASTLALLNAGVPLKAPVAGIAMGLVSDDIELADGTAERRFVALTDILGAEDAFGDMDFKVAGTKDFVTALQLDTKLDGIPSQVLAAALSQAKDARTTILEVMAEAIDAPDEMSPYAPRITTIKVPVDKIGEVIGPKGKMINSITEETGANISIEDDGTVFVGAADGASAQAAIDKINAIANPQLPKIGERFLGTVVKTTDFGAFVSLLPGRDGLVHISKLGKGKRIAKVEDVVKVGDKIQVEIADIDNRGKISLVPVGEEDAAEAPAPAEAQPADAVTQ.

Positions 527 and 533 each coordinate Mg(2+). A KH domain is found at 593 to 652; the sequence is PRITTIKVPVDKIGEVIGPKGKMINSITEETGANISIEDDGTVFVGAADGASAQAAIDKI. Residues 664-733 enclose the S1 motif domain; the sequence is GERFLGTVVK…NRGKISLVPV (70 aa). The disordered stretch occupies residues 734–755; sequence GEEDAAEAPAPAEAQPADAVTQ. The segment covering 740–755 has biased composition (low complexity); sequence EAPAPAEAQPADAVTQ.

Belongs to the polyribonucleotide nucleotidyltransferase family. It depends on Mg(2+) as a cofactor.

It is found in the cytoplasm. The catalysed reaction is RNA(n+1) + phosphate = RNA(n) + a ribonucleoside 5'-diphosphate. Its function is as follows. Involved in mRNA degradation. Catalyzes the phosphorolysis of single-stranded polyribonucleotides processively in the 3'- to 5'-direction. This chain is Polyribonucleotide nucleotidyltransferase, found in Mycobacteroides abscessus (strain ATCC 19977 / DSM 44196 / CCUG 20993 / CIP 104536 / JCM 13569 / NCTC 13031 / TMC 1543 / L948) (Mycobacterium abscessus).